The primary structure comprises 893 residues: Nitrate reductase [NADPH] (893 aa).

Residues 1–83 are disordered; the sequence is MSVTTQQPAV…KPTPDAHVPR (83 aa). A compositionally biased stretch (pro residues) spans 55 to 65; sequence PDFPLPPPANP. Basic and acidic residues predominate over residues 71 to 83; it reads DIDKPTPDAHVPR. C170 serves as a coordination point for Mo-molybdopterin. Residues 536 to 611 enclose the Cytochrome b5 heme-binding domain; it reads NRIVELDELK…MPAYHIGTLS (76 aa). H571 and H594 together coordinate heme. The FAD-binding FR-type domain occupies 641–752; sequence RTWSKALLSS…KGPIGKFEYL (112 aa). FAD-binding positions include 695 to 698, 712 to 716, 726 to 728, S776, and T779; these read RSYT, LIKIY, and KMT. 863–872 serves as a coordination point for NADP(+); that stretch reads LVLVCGPEGL.

Belongs to the nitrate reductase family. In terms of assembly, homodimer. FAD is required as a cofactor. It depends on heme as a cofactor. Requires Mo-molybdopterin as cofactor.

The catalysed reaction is nitrite + NADP(+) + H2O = nitrate + NADPH + H(+). In terms of biological role, nitrate reductase is a key enzyme involved in the first step of nitrate assimilation in plants, fungi and bacteria. The protein is Nitrate reductase [NADPH] (NIAD) of Leptosphaeria maculans (Blackleg fungus).